We begin with the raw amino-acid sequence, 544 residues long: Chaperonin GroEL (544 aa).

ATP contacts are provided by residues 30 to 33 (TLGP), K51, 87 to 91 (DGTTT), G415, 481 to 483 (DAL), and D497.

Belongs to the chaperonin (HSP60) family. Forms a cylinder of 14 subunits composed of two heptameric rings stacked back-to-back. Interacts with the co-chaperonin GroES.

The protein resides in the cytoplasm. It catalyses the reaction ATP + H2O + a folded polypeptide = ADP + phosphate + an unfolded polypeptide.. Functionally, together with its co-chaperonin GroES, plays an essential role in assisting protein folding. The GroEL-GroES system forms a nano-cage that allows encapsulation of the non-native substrate proteins and provides a physical environment optimized to promote and accelerate protein folding. The sequence is that of Chaperonin GroEL from Chlamydia felis (strain Fe/C-56) (Chlamydophila felis).